We begin with the raw amino-acid sequence, 502 residues long: T-complex protein 11-like X-linked protein 1 (502 aa).

Positions 1 to 36 (MPKTEETVLQNDPSVAENGAPEPKTPGQSQKSKSFC) are disordered.

This sequence belongs to the TCP11 family.

The sequence is that of T-complex protein 11-like X-linked protein 1 from Homo sapiens (Human).